The primary structure comprises 171 residues: Large ribosomal subunit protein uL15 (171 aa).

The segment covering 1–10 (MKLNEISDNN) has biased composition (polar residues). Disordered stretches follow at residues 1–44 (MKLN…RSGV) and 150–171 (LPEAQPSEQEKKAARREANKAK). Residues 21 to 35 (RGIGSGKGKTAGRGQ) show a composition bias toward gly residues. The span at 157–171 (EQEKKAARREANKAK) shows a compositional bias: basic and acidic residues.

This sequence belongs to the universal ribosomal protein uL15 family. As to quaternary structure, part of the 50S ribosomal subunit.

Its function is as follows. Binds to the 23S rRNA. This is Large ribosomal subunit protein uL15 from Novosphingobium aromaticivorans (strain ATCC 700278 / DSM 12444 / CCUG 56034 / CIP 105152 / NBRC 16084 / F199).